The following is a 433-amino-acid chain: GTPase Obg (433 aa).

An Obg domain is found at 1-159 (MAITDYCECR…LNVSLEVKYL (159 aa)). Residues 160 to 329 (ANVGIVGFPN…LLDRVFELYN (170 aa)) form the OBG-type G domain. Residues 166–173 (GFPNSGKS), 191–195 (FTTLI), 212–215 (DIPG), 282–285 (NKID), and 310–312 (ISA) contribute to the GTP site. Mg(2+)-binding residues include S173 and T193. Residues 355 to 433 (TNENNNDPLN…FDGCEFVIND (79 aa)) enclose the OCT domain.

Belongs to the TRAFAC class OBG-HflX-like GTPase superfamily. OBG GTPase family. In terms of assembly, monomer. Mg(2+) is required as a cofactor.

The protein resides in the cytoplasm. Functionally, an essential GTPase which binds GTP, GDP and possibly (p)ppGpp with moderate affinity, with high nucleotide exchange rates and a fairly low GTP hydrolysis rate. Plays a role in control of the cell cycle, stress response, ribosome biogenesis and in those bacteria that undergo differentiation, in morphogenesis control. This is GTPase Obg from Mycoplasma genitalium (strain ATCC 33530 / DSM 19775 / NCTC 10195 / G37) (Mycoplasmoides genitalium).